The sequence spans 257 residues: Ribonuclease HII (257 aa).

One can recognise an RNase H type-2 domain in the interval 71-257 (SLIAGIDEVG…TSFEPIKSML (187 aa)). Residues Asp-77, Glu-78, and Asp-172 each coordinate a divalent metal cation.

This sequence belongs to the RNase HII family. Mn(2+) serves as cofactor. Mg(2+) is required as a cofactor.

The protein localises to the cytoplasm. The catalysed reaction is Endonucleolytic cleavage to 5'-phosphomonoester.. Functionally, endonuclease that specifically degrades the RNA of RNA-DNA hybrids. The protein is Ribonuclease HII of Streptococcus uberis (strain ATCC BAA-854 / 0140J).